The primary structure comprises 292 residues: GID complex substrate-recognition subunit 10 (292 aa).

It belongs to the GID4/VID24 family. As to quaternary structure, substrate-recognition component of the GID/CTLH ubiquitin ligase complex. In the absence of stress, the complex exists as an inactive anticipatory complex (GID(Ant)), composed of VID30/GID1, the E3 ubiquitin-ligase RMD5/GID2, VID28/GID5, GID8, and the RING-like subunit FYV10/GID9, awaiting a substrate receptor to form the active E3 ligase complex. When cells are shifted to glucose-containing medium, the substrate receptor VID24/GID4 is induced and becomes part of the complex, named GID(SR4). Under osmotic or heat stress, the substrate receptor GID10 is induced and becomes part of the complex, named GID(SR10). Interacts with proteins that have an N-terminal Pro/N-degron, including ART2.

Substrate-recognition component of the GID E3 ligase complex recruiting N termini and catalyzing ubiquitination of proteins targeted for degradation. GID E3 is regulated through assembly with interchangeable N-degron-binding substrate receptors induced by distinct environmental perturbations. Required for the adaptation to osmotic or heat stress. Required for the regulation of protein levels of the adapter protein ART2, a component of the ART-Rsp5 ubiquitin ligase pathway, part of the plasma membrane quality control. Specific for substrates with an N-terminal Pro (Pro/N-degron), including ART2. Has high affinity for the N-terminal sequence Pro-Tyr-Ile-Thr, and also recognizes nonproline residues such as Met-Tyr-Ile-Thr-Val or Val-Cys-Phe-His. This Saccharomyces cerevisiae (strain ATCC 204508 / S288c) (Baker's yeast) protein is GID complex substrate-recognition subunit 10.